The primary structure comprises 179 residues: Large ribosomal subunit protein uL5 (179 aa).

Belongs to the universal ribosomal protein uL5 family. Part of the 50S ribosomal subunit; part of the 5S rRNA/L5/L18/L25 subcomplex. Contacts the 5S rRNA and the P site tRNA. Forms a bridge to the 30S subunit in the 70S ribosome.

This is one of the proteins that bind and probably mediate the attachment of the 5S RNA into the large ribosomal subunit, where it forms part of the central protuberance. In the 70S ribosome it contacts protein S13 of the 30S subunit (bridge B1b), connecting the 2 subunits; this bridge is implicated in subunit movement. Contacts the P site tRNA; the 5S rRNA and some of its associated proteins might help stabilize positioning of ribosome-bound tRNAs. This is Large ribosomal subunit protein uL5 from Halalkalibacterium halodurans (strain ATCC BAA-125 / DSM 18197 / FERM 7344 / JCM 9153 / C-125) (Bacillus halodurans).